The primary structure comprises 491 residues: Probable glycine dehydrogenase (decarboxylating) subunit 2 (491 aa).

Lys273 carries the N6-(pyridoxal phosphate)lysine modification.

This sequence belongs to the GcvP family. C-terminal subunit subfamily. As to quaternary structure, the glycine cleavage system is composed of four proteins: P, T, L and H. In this organism, the P 'protein' is a heterodimer of two subunits. Pyridoxal 5'-phosphate serves as cofactor.

It carries out the reaction N(6)-[(R)-lipoyl]-L-lysyl-[glycine-cleavage complex H protein] + glycine + H(+) = N(6)-[(R)-S(8)-aminomethyldihydrolipoyl]-L-lysyl-[glycine-cleavage complex H protein] + CO2. Its function is as follows. The glycine cleavage system catalyzes the degradation of glycine. The P protein binds the alpha-amino group of glycine through its pyridoxal phosphate cofactor; CO(2) is released and the remaining methylamine moiety is then transferred to the lipoamide cofactor of the H protein. This chain is Probable glycine dehydrogenase (decarboxylating) subunit 2, found in Bacillus velezensis (strain DSM 23117 / BGSC 10A6 / LMG 26770 / FZB42) (Bacillus amyloliquefaciens subsp. plantarum).